Here is a 307-residue protein sequence, read N- to C-terminus: Adenosylcobinamide-GDP ribazoletransferase (307 aa).

The next 8 helical transmembrane spans lie at P22–A42, P58–I78, G80–L100, F137–V157, V161–L181, T212–V232, A248–F268, and C283–A303.

The protein belongs to the CobS family. Mg(2+) is required as a cofactor.

The protein resides in the cell membrane. It carries out the reaction alpha-ribazole + adenosylcob(III)inamide-GDP = adenosylcob(III)alamin + GMP + H(+). It catalyses the reaction alpha-ribazole 5'-phosphate + adenosylcob(III)inamide-GDP = adenosylcob(III)alamin 5'-phosphate + GMP + H(+). It participates in cofactor biosynthesis; adenosylcobalamin biosynthesis; adenosylcobalamin from cob(II)yrinate a,c-diamide: step 7/7. Functionally, joins adenosylcobinamide-GDP and alpha-ribazole to generate adenosylcobalamin (Ado-cobalamin). Also synthesizes adenosylcobalamin 5'-phosphate from adenosylcobinamide-GDP and alpha-ribazole 5'-phosphate. The protein is Adenosylcobinamide-GDP ribazoletransferase of Corynebacterium glutamicum (strain ATCC 13032 / DSM 20300 / JCM 1318 / BCRC 11384 / CCUG 27702 / LMG 3730 / NBRC 12168 / NCIMB 10025 / NRRL B-2784 / 534).